An 899-amino-acid chain; its full sequence is Origin recognition complex subunit 5 (899 aa).

3 disordered regions span residues 27–47 (FSSPKKSRKESPIFVQNNDDT), 100–166 (DRIN…EYKD), and 194–238 (KNLE…DGNL). The span at 105 to 160 (SEEETNINDDNNDDNNGDYDDDNNSDDDDDNDDNNNNDDNNNDDDEDVDDFEDIKE) shows a compositional bias: acidic residues. Low complexity predominate over residues 207–218 (SSDNSMTSSSEE). Over residues 227-237 (ESDKESDKDGN) the composition is skewed to basic and acidic residues. 303 to 310 (GLPGMGKT) is an ATP binding site. The interval 409–469 (KRTTENIRSP…NNNSNNVRFN (61 aa)) is disordered. The segment covering 455–469 (KNNFNNNNSNNVRFN) has biased composition (low complexity).

It belongs to the ORC5 family. As to quaternary structure, component of the origin recognition complex (ORC). Interacts with PCNA1; the interaction occurs during the trophozoite stage but not at the late schizont stage.

Its subcellular location is the nucleus. It carries out the reaction ATP + H2O = ADP + phosphate + H(+). Its function is as follows. Component of the origin recognition complex (ORC) that binds origins of replication. This is Origin recognition complex subunit 5 from Plasmodium falciparum (isolate 3D7).